Consider the following 91-residue polypeptide: Small ribosomal subunit protein uS19 (91 aa).

The protein belongs to the universal ribosomal protein uS19 family.

Its function is as follows. Protein S19 forms a complex with S13 that binds strongly to the 16S ribosomal RNA. The chain is Small ribosomal subunit protein uS19 from Synechococcus sp. (strain WH7803).